Consider the following 648-residue polypeptide: 1-deoxy-D-xylulose-5-phosphate synthase (648 aa).

Residues H74 and 115–117 each bind thiamine diphosphate; that span reads GHA. D146 is a binding site for Mg(2+). Thiamine diphosphate contacts are provided by residues 147 to 148, N176, Y292, and E375; that span reads GA. N176 contributes to the Mg(2+) binding site.

It belongs to the transketolase family. DXPS subfamily. In terms of assembly, homodimer. Mg(2+) is required as a cofactor. The cofactor is thiamine diphosphate.

It catalyses the reaction D-glyceraldehyde 3-phosphate + pyruvate + H(+) = 1-deoxy-D-xylulose 5-phosphate + CO2. The protein operates within metabolic intermediate biosynthesis; 1-deoxy-D-xylulose 5-phosphate biosynthesis; 1-deoxy-D-xylulose 5-phosphate from D-glyceraldehyde 3-phosphate and pyruvate: step 1/1. Functionally, catalyzes the acyloin condensation reaction between C atoms 2 and 3 of pyruvate and glyceraldehyde 3-phosphate to yield 1-deoxy-D-xylulose-5-phosphate (DXP). This Synechococcus sp. (strain JA-2-3B'a(2-13)) (Cyanobacteria bacterium Yellowstone B-Prime) protein is 1-deoxy-D-xylulose-5-phosphate synthase.